A 160-amino-acid chain; its full sequence is Transcription elongation factor GreA (160 aa).

A coiled-coil region spans residues 1–72 (MAEKTYVMTL…QIQILETKIR (72 aa)).

This sequence belongs to the GreA/GreB family.

Its function is as follows. Necessary for efficient RNA polymerase transcription elongation past template-encoded arresting sites. The arresting sites in DNA have the property of trapping a certain fraction of elongating RNA polymerases that pass through, resulting in locked ternary complexes. Cleavage of the nascent transcript by cleavage factors such as GreA or GreB allows the resumption of elongation from the new 3'terminus. GreA releases sequences of 2 to 3 nucleotides. This is Transcription elongation factor GreA from Streptococcus thermophilus (strain ATCC BAA-491 / LMD-9).